The chain runs to 206 residues: Pyridoxine/pyridoxamine 5'-phosphate oxidase (206 aa).

FMN-binding positions include 53 to 58 (RMVLLK), 68 to 69 (YT), lysine 75, and glutamine 97. Residue lysine 58 coordinates substrate. Substrate-binding residues include tyrosine 115, arginine 119, and serine 123. FMN is bound by residues 132–133 (QS) and tryptophan 177. A substrate-binding site is contributed by 183–185 (RLH). Arginine 187 lines the FMN pocket.

The protein belongs to the pyridoxamine 5'-phosphate oxidase family. In terms of assembly, homodimer. FMN is required as a cofactor.

It carries out the reaction pyridoxamine 5'-phosphate + O2 + H2O = pyridoxal 5'-phosphate + H2O2 + NH4(+). The catalysed reaction is pyridoxine 5'-phosphate + O2 = pyridoxal 5'-phosphate + H2O2. The protein operates within cofactor metabolism; pyridoxal 5'-phosphate salvage; pyridoxal 5'-phosphate from pyridoxamine 5'-phosphate: step 1/1. It participates in cofactor metabolism; pyridoxal 5'-phosphate salvage; pyridoxal 5'-phosphate from pyridoxine 5'-phosphate: step 1/1. Functionally, catalyzes the oxidation of either pyridoxine 5'-phosphate (PNP) or pyridoxamine 5'-phosphate (PMP) into pyridoxal 5'-phosphate (PLP). The sequence is that of Pyridoxine/pyridoxamine 5'-phosphate oxidase from Rhizobium etli (strain ATCC 51251 / DSM 11541 / JCM 21823 / NBRC 15573 / CFN 42).